A 274-amino-acid chain; its full sequence is MGLKRFKPTSPARRQMIIPDFSEITKKEPEKSLIAPLKKTGGRNSYGRVTVRFRGGGHKRKYRIIDFKRDKVGIPAKVVSIEYDPNRTARIALLVYADGEKRYILAPQDLNVGDMVMNGPDAEIKPGNALPLENIPVGTVIHNVEYIPGKGGQIARSAGTSCQLMAKEGKYALLRMPSGELRKVPVKCYATIGVVGNEDHKNEVDGKAGRVRWKGRKPHVRGVAMNPVDHPHGGGEGRGKGHHPQSPWGQLAKGYKTRRGKKASDKLIVRRRNG.

Residues 222-274 are disordered; that stretch reads GVAMNPVDHPHGGGEGRGKGHHPQSPWGQLAKGYKTRRGKKASDKLIVRRRNG. Residues 229–239 are compositionally biased toward basic and acidic residues; that stretch reads DHPHGGGEGRG.

It belongs to the universal ribosomal protein uL2 family. As to quaternary structure, part of the 50S ribosomal subunit. Forms a bridge to the 30S subunit in the 70S ribosome.

One of the primary rRNA binding proteins. Required for association of the 30S and 50S subunits to form the 70S ribosome, for tRNA binding and peptide bond formation. It has been suggested to have peptidyltransferase activity; this is somewhat controversial. Makes several contacts with the 16S rRNA in the 70S ribosome. The chain is Large ribosomal subunit protein uL2 from Thermosipho melanesiensis (strain DSM 12029 / CIP 104789 / BI429).